Consider the following 627-residue polypeptide: tRNA uridine 5-carboxymethylaminomethyl modification enzyme MnmG (627 aa).

Residues Gly13–Gly18, Val125, and Ser180 each bind FAD. Gly274–Phe288 contributes to the NAD(+) binding site. Residue Gln371 participates in FAD binding.

The protein belongs to the MnmG family. As to quaternary structure, homodimer. Heterotetramer of two MnmE and two MnmG subunits. Requires FAD as cofactor.

It is found in the cytoplasm. NAD-binding protein involved in the addition of a carboxymethylaminomethyl (cmnm) group at the wobble position (U34) of certain tRNAs, forming tRNA-cmnm(5)s(2)U34. This is tRNA uridine 5-carboxymethylaminomethyl modification enzyme MnmG from Francisella tularensis subsp. novicida (strain U112).